A 210-amino-acid chain; its full sequence is Putative transmembrane protein DDB_G0267530 (210 aa).

Residues 1–40 (MGVEDQPQTQPQTQPQQQPQMGYQPQMGYQPQAQMGYQPQ) are disordered. 2 helical membrane passes run 119–139 (VIVFIIGFFFSIVWLGGFFFI) and 148–168 (TFGILSVVFFFLVLVIVVIVV).

It is found in the membrane. The chain is Putative transmembrane protein DDB_G0267530 from Dictyostelium discoideum (Social amoeba).